A 322-amino-acid chain; its full sequence is Acetyl-coenzyme A carboxylase carboxyl transferase subunit alpha (322 aa).

A CoA carboxyltransferase C-terminal domain is found at 39-296 (DLTALKKQLI…HSKLVTELNY (258 aa)).

The protein belongs to the AccA family. Acetyl-CoA carboxylase is a heterohexamer composed of biotin carboxyl carrier protein (accB), biotin carboxylase (accC) and two subunits each of ACCase subunit alpha (accA) and ACCase subunit beta (accD).

It localises to the plastid. It is found in the chloroplast. The enzyme catalyses N(6)-carboxybiotinyl-L-lysyl-[protein] + acetyl-CoA = N(6)-biotinyl-L-lysyl-[protein] + malonyl-CoA. It functions in the pathway lipid metabolism; malonyl-CoA biosynthesis; malonyl-CoA from acetyl-CoA: step 1/1. Component of the acetyl coenzyme A carboxylase (ACC) complex. First, biotin carboxylase catalyzes the carboxylation of biotin on its carrier protein (BCCP) and then the CO(2) group is transferred by the carboxyltransferase to acetyl-CoA to form malonyl-CoA. The sequence is that of Acetyl-coenzyme A carboxylase carboxyl transferase subunit alpha from Antithamnion sp. (Red alga).